The primary structure comprises 515 residues: Galactose/methyl galactoside import ATP-binding protein MglA (515 aa).

ABC transporter domains lie at 8 to 243 and 254 to 499; these read LEMR…VGRE and IPKE…AKYL. 40–47 lines the ATP pocket; sequence GENGAGKS.

This sequence belongs to the ABC transporter superfamily. Galactose/methyl galactoside importer (TC 3.A.1.2.3) family. In terms of assembly, the complex is composed of one ATP-binding protein (MglA), two transmembrane proteins (MglC) and a solute-binding protein (MglB).

The protein resides in the cell membrane. It catalyses the reaction D-galactose(out) + ATP + H2O = D-galactose(in) + ADP + phosphate + H(+). It carries out the reaction methyl beta-D-galactoside(out) + ATP + H2O = methyl beta-D-galactoside(in) + ADP + phosphate + H(+). Part of the ABC transporter complex MglABC involved in galactose/methyl galactoside import. Responsible for energy coupling to the transport system. This Clostridium perfringens (strain ATCC 13124 / DSM 756 / JCM 1290 / NCIMB 6125 / NCTC 8237 / Type A) protein is Galactose/methyl galactoside import ATP-binding protein MglA.